The chain runs to 368 residues: F-box only protein 28 (368 aa).

The span at 1 to 11 shows a compositional bias: basic and acidic residues; the sequence is MAAASEERMAE. Residues 1-57 are disordered; that stretch reads MAAASEERMAEEGGGGHGDGGSPSAIASTQRLPPPPPPQPPQPGSQAPPAPALAPDQ. Gly residues predominate over residues 12 to 21; the sequence is EGGGGHGDGG. Over residues 32 to 52 the composition is skewed to pro residues; the sequence is LPPPPPPQPPQPGSQAPPAPA. Residues 61–109 enclose the F-box domain; that stretch reads NNTLVALPIVAIENILSFMSYDEISQLRLVCKRMDLVCQRMLNQGFLKV. A phosphoserine mark is found at Ser-235 and Ser-242. Thr-270 is modified (phosphothreonine). Positions 328-368 are disordered; it reads MESAVGNSSGSGQSEESPRKRKKAAEAIDSLRKSKRLRNRK. Phosphoserine is present on Ser-344.

Part of a SCF (SKP1-cullin-F-box) protein ligase complex.

Its subcellular location is the chromosome. The protein localises to the centromere. The protein resides in the kinetochore. Functionally, probably recognizes and binds to some phosphorylated proteins and promotes their ubiquitination and degradation. This Bos taurus (Bovine) protein is F-box only protein 28 (FBXO28).